The following is a 384-amino-acid chain: MIISSSNDYREAAKRRLPPFLFHYIDGGAYAEYTLKRNVEDLSQIALRQRVLNDMSSLSLETKLFNETLSMPVALSPVGLTGMYARRGEVQAAVAADKKGIPFTMSTVSVCPIEEVTPAIKRPMWFQLYVLRDRGFMKNALERAKAAGCSTLVFTVDMPVPGARYRDAHSGMSGPNAAMRRYLQSMMHPQWAWDVGLLGRPHDLGNISKYLGKTTGLEDYISWLGSNFDPSISWKDLEWIREFWDGPMVIKGILDPEDAKDAVRFGADGIVVSNHGGRQLDGVMSSARAMPAIAEAVKGDLTILADSGIRNGLDVVRMLALGADSVMLGRAFIYALAAQGGQGVSNLLDLIDKEMRVAMTLTGAKTIADINESCLVEMNKLIQS.

One can recognise an FMN hydroxy acid dehydrogenase domain in the interval 1-380 (MIISSSNDYR…NESCLVEMNK (380 aa)). A substrate-binding site is contributed by Tyr24. FMN-binding residues include Ser106 and Gln127. Position 129 (Tyr129) interacts with substrate. FMN is bound at residue Thr155. Arg164 contributes to the substrate binding site. Lys251 lines the FMN pocket. His275 serves as the catalytic Proton acceptor. Arg278 contacts substrate. Position 306–330 (306–330 (DSGIRNGLDVVRMLALGADSVMLGR)) interacts with FMN.

Belongs to the FMN-dependent alpha-hydroxy acid dehydrogenase family. It depends on FMN as a cofactor.

It is found in the cell inner membrane. It catalyses the reaction (S)-lactate + A = pyruvate + AH2. Catalyzes the conversion of L-lactate to pyruvate. Is coupled to the respiratory chain. The polypeptide is L-lactate dehydrogenase (Acinetobacter baylyi (strain ATCC 33305 / BD413 / ADP1)).